Consider the following 251-residue polypeptide: Ribonuclease HII (251 aa).

Residues 32-223 (GPVAGVDEAG…VRERLGLRPL (192 aa)) form the RNase H type-2 domain. 3 residues coordinate a divalent metal cation: D38, E39, and D132.

It belongs to the RNase HII family. Requires Mn(2+) as cofactor. The cofactor is Mg(2+).

The protein resides in the cytoplasm. It carries out the reaction Endonucleolytic cleavage to 5'-phosphomonoester.. Functionally, endonuclease that specifically degrades the RNA of RNA-DNA hybrids. In Nocardia farcinica (strain IFM 10152), this protein is Ribonuclease HII.